A 1060-amino-acid polypeptide reads, in one-letter code: Carbamoyl phosphate synthase large chain (1060 aa).

Residues 1–401 (MPKRTDIRKI…SLLKAVRSLE (401 aa)) form a carboxyphosphate synthetic domain region. 12 residues coordinate ATP: Arg129, Arg169, Gly175, Gly176, Gln208, Ile210, Glu215, Gly241, Ile242, His243, Gln284, and Glu298. One can recognise an ATP-grasp 1 domain in the interval 133-327 (KNLMNQLNEP…IAKMAAKIAV (195 aa)). Mg(2+) is bound by residues Gln284, Glu298, and Asn300. Mn(2+) is bound by residues Gln284, Glu298, and Asn300. Residues 402-546 (IGTAHLELDG…YTTYEQENES (145 aa)) form an oligomerization domain region. Positions 547–929 (LVSAKPSILV…ALYKAFEASG (383 aa)) are carbamoyl phosphate synthetic domain. An ATP-grasp 2 domain is found at 671–861 (DQLIQELNIP…MAQLATQLIL (191 aa)). ATP is bound by residues Arg707, Arg746, Leu748, Glu752, Gly777, Val778, His779, Ser780, Gln820, and Glu832. The Mg(2+) site is built by Gln820, Glu832, and Asn834. Gln820, Glu832, and Asn834 together coordinate Mn(2+). One can recognise an MGS-like domain in the interval 930–1060 (MHLPSHGNVL…ESQSLLTKPL (131 aa)). Residues 930-1060 (MHLPSHGNVL…ESQSLLTKPL (131 aa)) form an allosteric domain region.

It belongs to the CarB family. In terms of assembly, composed of two chains; the small (or glutamine) chain promotes the hydrolysis of glutamine to ammonia, which is used by the large (or ammonia) chain to synthesize carbamoyl phosphate. Tetramer of heterodimers (alpha,beta)4. Mg(2+) serves as cofactor. The cofactor is Mn(2+).

It catalyses the reaction hydrogencarbonate + L-glutamine + 2 ATP + H2O = carbamoyl phosphate + L-glutamate + 2 ADP + phosphate + 2 H(+). The catalysed reaction is hydrogencarbonate + NH4(+) + 2 ATP = carbamoyl phosphate + 2 ADP + phosphate + 2 H(+). It functions in the pathway amino-acid biosynthesis; L-arginine biosynthesis; carbamoyl phosphate from bicarbonate: step 1/1. Its pathway is pyrimidine metabolism; UMP biosynthesis via de novo pathway; (S)-dihydroorotate from bicarbonate: step 1/3. In terms of biological role, large subunit of the glutamine-dependent carbamoyl phosphate synthetase (CPSase). CPSase catalyzes the formation of carbamoyl phosphate from the ammonia moiety of glutamine, carbonate, and phosphate donated by ATP, constituting the first step of 2 biosynthetic pathways, one leading to arginine and/or urea and the other to pyrimidine nucleotides. The large subunit (synthetase) binds the substrates ammonia (free or transferred from glutamine from the small subunit), hydrogencarbonate and ATP and carries out an ATP-coupled ligase reaction, activating hydrogencarbonate by forming carboxy phosphate which reacts with ammonia to form carbamoyl phosphate. This chain is Carbamoyl phosphate synthase large chain, found in Latilactobacillus sakei subsp. sakei (strain 23K) (Lactobacillus sakei subsp. sakei).